An 80-amino-acid polypeptide reads, in one-letter code: Protein pegasus (80 aa).

The signal sequence occupies residues 1 to 22; it reads MKLSAVLLAIALLALSLVQCLG. One can recognise a Kazal-like domain in the interval 24–80; it reads PDPSTKCVMECDTQEYRSICAADDKGSTKTYRNLCVMKTENCLQNANFQKISDKECP. 3 disulfides stabilise this stretch: cysteine 30/cysteine 65, cysteine 34/cysteine 58, and cysteine 43/cysteine 79.

Interacts with wg; the interaction facilitates short-range diffusion of wg. Strongly expressed in the developing fly wing but is excluded from the presumptive wing margin.

The protein localises to the secreted. Functionally, increases short-range diffusion of the wingless/wg protein, enhancing its signaling and expression of target genes required for wing margin morphogenesis. May act as a serine protease inhibitor since it possess the Kazal serine protease inhibitor signature. This chain is Protein pegasus, found in Drosophila melanogaster (Fruit fly).